Here is a 440-residue protein sequence, read N- to C-terminus: RNA polymerase II C-terminal domain phosphatase-like 4 (440 aa).

Residues 1 to 36 (MSVASDSPVHSSSSSDDLAAFLDAELDSASDASSGP) are compositionally biased toward low complexity. The interval 1–49 (MSVASDSPVHSSSSSDDLAAFLDAELDSASDASSGPSEEEEAEDDVESG) is disordered. Acidic residues predominate over residues 37–47 (SEEEEAEDDVE). Positions 118–292 (QRQRKLYLVL…DHRYKSLSEL (175 aa)) constitute an FCP1 homology domain. In terms of domain architecture, BRCT spans 337-429 (VRKEILKGCK…MKQPEENFGL (93 aa)).

Interacts with RAP74. It depends on Mg(2+) as a cofactor. Co(2+) is required as a cofactor. Requires Mn(2+) as cofactor.

It localises to the nucleus. It carries out the reaction O-phospho-L-seryl-[protein] + H2O = L-seryl-[protein] + phosphate. The enzyme catalyses O-phospho-L-threonyl-[protein] + H2O = L-threonyl-[protein] + phosphate. Functionally, processively dephosphorylates 'Ser-2' and/or 'Ser-5' of the heptad repeats YSPTSPS in the C-terminal domain of the largest RNA polymerase II subunit (RPB1). This promotes the activity of RNA polymerase II. Required for normal plant growth. The polypeptide is RNA polymerase II C-terminal domain phosphatase-like 4 (CPL4) (Arabidopsis thaliana (Mouse-ear cress)).